A 272-amino-acid chain; its full sequence is Phosphate import ATP-binding protein PstB 1 (272 aa).

The ABC transporter domain maps to 26–267 (ISIENLNLFY…PMKKQTEDYI (242 aa)). 58–65 (GPSGCGKS) contacts ATP.

It belongs to the ABC transporter superfamily. Phosphate importer (TC 3.A.1.7) family. The complex is composed of two ATP-binding proteins (PstB), two transmembrane proteins (PstC and PstA) and a solute-binding protein (PstS).

It is found in the cell inner membrane. It carries out the reaction phosphate(out) + ATP + H2O = ADP + 2 phosphate(in) + H(+). Functionally, part of the ABC transporter complex PstSACB involved in phosphate import. Responsible for energy coupling to the transport system. The protein is Phosphate import ATP-binding protein PstB 1 of Vibrio parahaemolyticus serotype O3:K6 (strain RIMD 2210633).